Consider the following 176-residue polypeptide: uncharacterized protein (176 aa).

This is an uncharacterized protein from Caenorhabditis elegans.